The chain runs to 217 residues: 3,4-dihydroxy-2-butanone 4-phosphate synthase (217 aa).

D-ribulose 5-phosphate contacts are provided by residues 37–38 (RE), D42, 150–154 (RRGHT), and E174. Residue E38 participates in Mg(2+) binding. H153 is a Mg(2+) binding site.

This sequence belongs to the DHBP synthase family. In terms of assembly, homodimer. Mg(2+) serves as cofactor. The cofactor is Mn(2+).

The enzyme catalyses D-ribulose 5-phosphate = (2S)-2-hydroxy-3-oxobutyl phosphate + formate + H(+). The protein operates within cofactor biosynthesis; riboflavin biosynthesis; 2-hydroxy-3-oxobutyl phosphate from D-ribulose 5-phosphate: step 1/1. In terms of biological role, catalyzes the conversion of D-ribulose 5-phosphate to formate and 3,4-dihydroxy-2-butanone 4-phosphate. In Shewanella sediminis (strain HAW-EB3), this protein is 3,4-dihydroxy-2-butanone 4-phosphate synthase.